The sequence spans 302 residues: Ornithine carbamoyltransferase (302 aa).

Carbamoyl phosphate-binding positions include 52–55, glutamine 79, arginine 103, and 130–133; these read STRT and HPCQ. Residues asparagine 161, aspartate 221, and 225–226 contribute to the L-ornithine site; that span reads SM. Residues 261 to 262 and arginine 289 each bind carbamoyl phosphate; that span reads CL.

The protein belongs to the aspartate/ornithine carbamoyltransferase superfamily. OTCase family.

It is found in the cytoplasm. It catalyses the reaction carbamoyl phosphate + L-ornithine = L-citrulline + phosphate + H(+). It participates in amino-acid biosynthesis; L-arginine biosynthesis; L-arginine from L-ornithine and carbamoyl phosphate: step 1/3. Reversibly catalyzes the transfer of the carbamoyl group from carbamoyl phosphate (CP) to the N(epsilon) atom of ornithine (ORN) to produce L-citrulline. The chain is Ornithine carbamoyltransferase from Methanosarcina mazei (strain ATCC BAA-159 / DSM 3647 / Goe1 / Go1 / JCM 11833 / OCM 88) (Methanosarcina frisia).